Consider the following 36-residue polypeptide: Putative DNA-binding protein inhibitor ID-2B (36 aa).

The sequence is that of Putative DNA-binding protein inhibitor ID-2B (ID2B) from Homo sapiens (Human).